A 276-amino-acid polypeptide reads, in one-letter code: Octanoyltransferase LipM (276 aa).

In terms of domain architecture, BPL/LPL catalytic spans 32–247; it reads GALPPVIRFY…GFEKGLDIKL (216 aa). The active-site Acyl-thioester intermediate is C149.

The protein belongs to the octanoyltransferase LipM family. In terms of assembly, monomer.

It carries out the reaction octanoyl-[ACP] + L-lysyl-[protein] = N(6)-octanoyl-L-lysyl-[protein] + holo-[ACP] + H(+). It functions in the pathway protein modification; protein lipoylation via endogenous pathway; protein N(6)-(lipoyl)lysine from octanoyl-[acyl-carrier-protein]. Functionally, catalyzes the transfer of endogenously produced octanoic acid from octanoyl-acyl-carrier-protein onto the lipoyl domain of GcvH, an intermediate carrier during protein lipoylation. This chain is Octanoyltransferase LipM, found in Macrococcus caseolyticus (strain JCSC5402) (Macrococcoides caseolyticum).